We begin with the raw amino-acid sequence, 314 residues long: Lipid A biosynthesis acyltransferase 2 (314 aa).

A helical transmembrane segment spans residues 17–37 (LSPVYWFTWFVLGMIAGISMF). The HXXXXD motif signature appears at 137 to 142 (HGWSVD).

It belongs to the LpxL/LpxM/LpxP family. LpxM subfamily.

It is found in the cell inner membrane. It catalyses the reaction an alpha-Kdo-(2-&gt;4)-alpha-Kdo-(2-&gt;6)-(acyl)-lipid IVA + a fatty acyl-[ACP] = an alpha-Kdo-(2-&gt;4)-alpha-Kdo-(2-&gt;6)-lipid A + holo-[ACP]. Its pathway is glycolipid biosynthesis; KDO(2)-lipid A biosynthesis; KDO(2)-lipid A from CMP-3-deoxy-D-manno-octulosonate and lipid IV(A): step 4/4. It functions in the pathway bacterial outer membrane biogenesis; lipopolysaccharide biosynthesis. Functionally, catalyzes the transfer of an acyl chain from an acyl-[acyl-carrier-protein] (ACP) to a Kdo(2)-(acyl)-lipid IV(A) to form a Kdo(2)-lipid A. The sequence is that of Lipid A biosynthesis acyltransferase 2 from Shigella flexneri.